Here is an 898-residue protein sequence, read N- to C-terminus: Magnesium-transporting ATPase, P-type 1 (898 aa).

Over 1-94 the chain is Cytoplasmic; it reads MFKEIFTRLI…QPSPWWVHLW (94 aa). Residues 95-115 traverse the membrane as a helical segment; the sequence is VCYRNPFNILLTILGAISYAT. Position 116 (glutamate 116) is a topological domain, extracellular. A helical transmembrane segment spans residues 117–137; it reads DLFAAGVIALMVAISTLLNFI. Residues 138 to 287 are Cytoplasmic-facing; sequence QEARSTKAAD…PNAFQQGISR (150 aa). A helical transmembrane segment spans residues 288 to 308; that stretch reads VSMLLIRFMLVMAPVVLLING. At 309–317 the chain is on the extracellular side; that stretch reads YTKGDWWEA. A helical transmembrane segment spans residues 318 to 335; sequence ALFALSVAVGLTPEMLPM. Position 331 (glutamate 331) interacts with Mg(2+). Topologically, residues 336–695 are cytoplasmic; the sequence is IVTSTLARGA…IEGRRTFANM (360 aa). Aspartate 373 serves as the catalytic 4-aspartylphosphate intermediate. Mg(2+)-binding residues include aspartate 641, aspartate 645, and asparagine 709. A helical transmembrane segment spans residues 696-715; it reads LKYIKMTASSNFGNVFSVLV. Topologically, residues 716-724 are extracellular; it reads ASAFLPFLP. Residues 725–744 traverse the membrane as a helical segment; that stretch reads MLPLHLLIQNLLYDVSQVAI. 2 residues coordinate Mg(2+): asparagine 734 and aspartate 738. The Cytoplasmic portion of the chain corresponds to 745 to 766; sequence PFDNVDDEQIQKPQRWNPADLG. The helical transmembrane segment at 767–790 threads the bilayer; that stretch reads RFMIFFGPISSIFDILTFCLMWWV. Over 791–799 the chain is Extracellular; the sequence is FHANTPETQ. The helical transmembrane segment at 800–818 threads the bilayer; sequence TLFQSGWFVVGLLSQTLIV. Residues 819–831 lie on the Cytoplasmic side of the membrane; the sequence is HMIRTRRVPFIQS. A helical transmembrane segment spans residues 832–851; it reads CASWPLMIMTVIVMIVGIAL. Residues 852 to 866 are Extracellular-facing; the sequence is PFSPLASYLQLQALP. A helical membrane pass occupies residues 867-886; that stretch reads LSYFPWLVAILAGYMTLTQL. Topologically, residues 887–898 are cytoplasmic; the sequence is VKGFYSRRYGWQ.

The protein belongs to the cation transport ATPase (P-type) (TC 3.A.3) family. Type IIIB subfamily.

Its subcellular location is the cell inner membrane. It catalyses the reaction Mg(2+)(out) + ATP + H2O = Mg(2+)(in) + ADP + phosphate + H(+). Functionally, mediates magnesium influx to the cytosol. The sequence is that of Magnesium-transporting ATPase, P-type 1 (mgtA) from Escherichia coli O157:H7.